Here is a 263-residue protein sequence, read N- to C-terminus: Insertion sequence IS21-like putative ATP-binding protein (263 aa).

Position 114–121 (114–121 (GPSGTGKT)) interacts with ATP.

Belongs to the IS21/IS1162 putative ATP-binding protein family.

The chain is Insertion sequence IS21-like putative ATP-binding protein (tnpB) from Bacteroides fragilis.